A 379-amino-acid chain; its full sequence is Putative nucleosome assembly protein C2D10.11C (379 aa).

Residues 1–10 (MSKGPGDFKK) show a composition bias toward basic and acidic residues. 2 disordered regions span residues 1-30 (MSKGPGDFKKSWNGFAAQTPQNTPSSDVHL) and 345-379 (SDFNQMDEEDSEDAYTDEEDLSSDDEEILSSEISD). Positions 16 to 28 (AAQTPQNTPSSDV) are enriched in polar residues.

Belongs to the nucleosome assembly protein (NAP) family.

Its subcellular location is the nucleus. In Schizosaccharomyces pombe (strain 972 / ATCC 24843) (Fission yeast), this protein is Putative nucleosome assembly protein C2D10.11C.